We begin with the raw amino-acid sequence, 129 residues long: Calcitonin gene-related peptide 2 (129 aa).

The N-terminal stretch at 1 to 25 is a signal peptide; that stretch reads MGFGKPSSFLAFSILVLCQAGSLQA. Positions 26-81 are excised as a propeptide; that stretch reads QPLRSSLESLPDPAALSEKEGRLLLAALVKAYVQRKTNELEQEQEQEMEGSSLTAQ. A disulfide bond links cysteine 85 and cysteine 90. Phenylalanine amide is present on phenylalanine 120. A propeptide spanning residues 126-129 is cleaved from the precursor; it reads DLQA.

It belongs to the calcitonin family.

The protein localises to the secreted. Functionally, CALCB/CGRP2 is a peptide hormone that induces vasodilation mediated by the CALCRL-RAMP1 receptor complex. Dilates a variety of vessels including the coronary, cerebral and systemic vasculature. Its abundance in the CNS also points toward a neurotransmitter or neuromodulator role. This chain is Calcitonin gene-related peptide 2 (CALCB), found in Equus caballus (Horse).